The sequence spans 417 residues: NADH-quinone oxidoreductase subunit D (417 aa).

It belongs to the complex I 49 kDa subunit family. As to quaternary structure, NDH-1 is composed of 14 different subunits. Subunits NuoB, C, D, E, F, and G constitute the peripheral sector of the complex.

It is found in the cell inner membrane. The catalysed reaction is a quinone + NADH + 5 H(+)(in) = a quinol + NAD(+) + 4 H(+)(out). Its function is as follows. NDH-1 shuttles electrons from NADH, via FMN and iron-sulfur (Fe-S) centers, to quinones in the respiratory chain. The immediate electron acceptor for the enzyme in this species is believed to be ubiquinone. Couples the redox reaction to proton translocation (for every two electrons transferred, four hydrogen ions are translocated across the cytoplasmic membrane), and thus conserves the redox energy in a proton gradient. The chain is NADH-quinone oxidoreductase subunit D from Verminephrobacter eiseniae (strain EF01-2).